Reading from the N-terminus, the 1562-residue chain is Phospholipid-transporting ATPase dnf1 (1562 aa).

Disordered regions lie at residues 1-38 (MKSS…ADDG), 55-94 (LPLG…SDSR), 115-134 (TPST…KKAH), and 146-166 (PLDD…NGRP). The Extracellular segment spans residues 1–275 (MKSSGIAGDS…IAIMQMIPGW (275 aa)). Over residues 12–21 (GFETNFLNET) the composition is skewed to polar residues. Residues 60 to 69 (DENELDEIDI) show a composition bias toward acidic residues. The segment covering 71-86 (GDSKKLDSVEVDESHD) has biased composition (basic and acidic residues). Residues 276–296 (STTGTYTTIIPLLIFISIAIL) traverse the membrane as a helical segment. Over 297 to 574 (REGFDNYRRY…APSMQKVTNR (278 aa)) the chain is Cytoplasmic. The segment at 347–406 (SQESASRSTIRSTDEREPERTSEDPPQLPPSPSSPSSPALSVKPNIDPQPPLYNSTLTTT) is disordered. Residues 358 to 369 (STDEREPERTSE) are compositionally biased toward basic and acidic residues. Positions 372-381 (PQLPPSPSSP) are enriched in pro residues. A helical transmembrane segment spans residues 575–595 (IVIFIFALVVSMAIYCTAAYF). Over 596 to 614 (VWQKKVERKLWYLTNSKLS) the chain is Extracellular. A helical transmembrane segment spans residues 615 to 635 (FVPILVSFIILYNTMVPISLY). Residues 636 to 1309 (VSMEIIRVFQ…YILGTFYKEQ (674 aa)) are Cytoplasmic-facing. Aspartate 684 functions as the 4-aspartylphosphate intermediate in the catalytic mechanism. Residues aspartate 684, lysine 685, threonine 686, glutamate 794, phenylalanine 843, serine 845, lysine 848, and lysine 866 each contribute to the ATP site. Aspartate 684 serves as a coordination point for Mg(2+). Threonine 686 is a binding site for Mg(2+). The residue at position 954 (serine 954) is a Phosphoserine. Residues arginine 1022, threonine 1023, threonine 1102, glycine 1103, aspartate 1104, 1181-1188 (VIVIDGST), arginine 1216, and lysine 1222 contribute to the ATP site. Aspartate 1243 serves as a coordination point for Mg(2+). ATP-binding residues include asparagine 1246 and aspartate 1247. The helical transmembrane segment at 1310-1330 (FFFLMQAIMQPFVGYTGQSLY) threads the bilayer. Residues 1331–1332 (ES) are Extracellular-facing. A helical membrane pass occupies residues 1333–1353 (WGLTCFNTLFSSLCVIGLGIF). The Cytoplasmic portion of the chain corresponds to 1354–1381 (EKDLSASTVIAVPELYQKGINNEAFNWR). The helical transmembrane segment at 1382–1402 (VYFGWCSIAFIQAFLVFYVTY) threads the bilayer. Over 1403–1414 (SLFGMKELNDNN) the chain is Extracellular. The helical transmembrane segment at 1415–1435 (IFAYGQLIFTAAIFIMNFKLV) threads the bilayer. The Cytoplasmic segment spans residues 1436–1443 (FIEMQYIN). The chain crosses the membrane as a helical span at residues 1444–1464 (IISIIVLVLTSLAWFLFNIFI). Topologically, residues 1465–1490 (SEHYPDKNLYLARSQFLHHFGKNPSW) are extracellular. The chain crosses the membrane as a helical span at residues 1491-1511 (WLTMLFVMVCALTIDIVAQML). Residues 1512–1562 (RRTLRPTDTDIFVEMENDAFVRSRFEQESGEFLQANAPSVDEIEQYLKSRD) lie on the Cytoplasmic side of the membrane.

The protein belongs to the cation transport ATPase (P-type) (TC 3.A.3) family. Type IV subfamily. Requires Mg(2+) as cofactor.

It is found in the golgi apparatus. The protein localises to the trans-Golgi network membrane. The protein resides in the endosome membrane. The enzyme catalyses ATP + H2O + phospholipidSide 1 = ADP + phosphate + phospholipidSide 2.. It catalyses the reaction a 1,2-diacyl-sn-glycero-3-phosphocholine(out) + ATP + H2O = a 1,2-diacyl-sn-glycero-3-phosphocholine(in) + ADP + phosphate + H(+). The catalysed reaction is a 1,2-diacyl-sn-glycero-3-phosphoethanolamine(out) + ATP + H2O = a 1,2-diacyl-sn-glycero-3-phosphoethanolamine(in) + ADP + phosphate + H(+). In terms of biological role, catalytic component of a P4-ATPase flippase complex which catalyzes the hydrolysis of ATP coupled to the transport of phosphatidylcholine and small amounts of phosphatidylethanolamine from the lumen to the cytosolic leaflet of the trans-Golgi network and ensures the maintenance of asymmetric distribution of phospholipids. May be involved in transport from early endosomes to the trans-Golgi network (TGN). This is Phospholipid-transporting ATPase dnf1 from Schizosaccharomyces pombe (strain 972 / ATCC 24843) (Fission yeast).